The primary structure comprises 256 residues: Hydroxyacylglutathione hydrolase (256 aa).

7 residues coordinate Zn(2+): histidine 57, histidine 59, aspartate 61, histidine 62, histidine 115, aspartate 134, and histidine 172.

It belongs to the metallo-beta-lactamase superfamily. Glyoxalase II family. As to quaternary structure, monomer. The cofactor is Zn(2+).

It catalyses the reaction an S-(2-hydroxyacyl)glutathione + H2O = a 2-hydroxy carboxylate + glutathione + H(+). Its pathway is secondary metabolite metabolism; methylglyoxal degradation; (R)-lactate from methylglyoxal: step 2/2. Functionally, thiolesterase that catalyzes the hydrolysis of S-D-lactoyl-glutathione to form glutathione and D-lactic acid. The chain is Hydroxyacylglutathione hydrolase from Rhodospirillum rubrum (strain ATCC 11170 / ATH 1.1.1 / DSM 467 / LMG 4362 / NCIMB 8255 / S1).